The chain runs to 159 residues: Disulfide bond formation protein B (159 aa).

At 1–8 (MQANSRAF) the chain is on the cytoplasmic side. The helical transmembrane segment at 9 to 25 (FLLIAVIAFGLVGYALY) threads the bilayer. Residues 26 to 43 (LQHVEGLQPCPLCVLQRF) are Periplasmic-facing. A disulfide bond links cysteine 35 and cysteine 38. A helical membrane pass occupies residues 44-57 (AFVGIGVFSLLAAL). The Cytoplasmic portion of the chain corresponds to 58-63 (SSATRL). Residues 64 to 81 (LWHGLGMLSGLGGIFVAG) form a helical membrane-spanning segment. Residues 82–136 (YHVSLLLNPKASCGIDPIENWVNALPTAKWLPQVFESDGLCTAPLPPVLGVSIPL) lie on the Periplasmic side of the membrane. A disulfide bridge connects residues cysteine 94 and cysteine 122. A helical transmembrane segment spans residues 137–155 (WSLIWMVILALTLVVAMIR). The Cytoplasmic portion of the chain corresponds to 156 to 159 (RERR).

Belongs to the DsbB family.

It is found in the cell inner membrane. In terms of biological role, required for disulfide bond formation in some periplasmic proteins. Acts by oxidizing the DsbA protein. In Ralstonia nicotianae (strain ATCC BAA-1114 / GMI1000) (Ralstonia solanacearum), this protein is Disulfide bond formation protein B.